The following is a 326-amino-acid chain: Thrombopoietin (326 aa).

A signal peptide spans 1-21 (MELTDLLLVAILLLTARLTLS). Disulfide bonds link Cys28–Cys172 and Cys50–Cys106. N-linked (GlcNAc...) asparagine glycans are attached at residues Asn197, Asn206, Asn235, Asn249, and Asn256. The segment at 307–326 (FPPSPTFPTPGSPPQLPPVS) is disordered. Pro residues predominate over residues 308–326 (PPSPTFPTPGSPPQLPPVS).

It belongs to the EPO/TPO family.

Its subcellular location is the secreted. In terms of biological role, lineage-specific cytokine affecting the proliferation and maturation of megakaryocytes from their committed progenitor cells. It acts at a late stage of megakaryocyte development. It may be the major physiological regulator of circulating platelets. The protein is Thrombopoietin (Thpo) of Rattus norvegicus (Rat).